We begin with the raw amino-acid sequence, 162 residues long: Eukaryotic translation initiation factor 5 (162 aa).

Residues 59–162 (PPNLNPAVQG…EKDRMDIFYE (104 aa)) form a disordered region. Residues 85–109 (GDTNGDTSQVDDQNESLEASVNENS) are compositionally biased toward polar residues. The span at 148–162 (DLEKREKDRMDIFYE) shows a compositional bias: basic and acidic residues.

Belongs to the eIF-2-beta/eIF-5 family.

In terms of biological role, catalyzes the hydrolysis of GTP bound to the 40S ribosomal initiation complex (40S.mRNA.Met-tRNA[F].eIF-2.GTP) with the subsequent joining of a 60S ribosomal subunit resulting in the release of eIF-2 and the guanine nucleotide. The subsequent joining of a 60S ribosomal subunit results in the formation of a functional 80S initiation complex (80S.mRNA.Met-tRNA[F]). This is Eukaryotic translation initiation factor 5 from Tribolium castaneum (Red flour beetle).